The primary structure comprises 171 residues: Shikimate kinase (171 aa).

ATP is bound at residue 14 to 19; the sequence is GAGKST. Position 18 (S18) interacts with Mg(2+). Residues D36, R60, and G82 each coordinate substrate. Residue R120 participates in ATP binding. R139 lines the substrate pocket. ATP is bound at residue Q156.

This sequence belongs to the shikimate kinase family. Monomer. It depends on Mg(2+) as a cofactor.

Its subcellular location is the cytoplasm. The catalysed reaction is shikimate + ATP = 3-phosphoshikimate + ADP + H(+). It participates in metabolic intermediate biosynthesis; chorismate biosynthesis; chorismate from D-erythrose 4-phosphate and phosphoenolpyruvate: step 5/7. Catalyzes the specific phosphorylation of the 3-hydroxyl group of shikimic acid using ATP as a cosubstrate. The protein is Shikimate kinase of Shewanella pealeana (strain ATCC 700345 / ANG-SQ1).